The following is a 101-amino-acid chain: Apolipoprotein C-II (101 aa).

The signal sequence occupies residues methionine 1 to glycine 22. A propeptide spans aspartate 23–glutamine 28 (removed in mature form). The lipid binding stretch occupies residues alanine 66 to methionine 74. Residues serine 78–proline 101 are lipoprotein lipase cofactor.

Belongs to the apolipoprotein C2 family. In terms of processing, proapolipoprotein C-II is synthesized as a sialic acid containing glycoprotein which is subsequently desialylated prior to its proteolytic processing. Proapolipoprotein C-II, the major form found in plasma undergoes proteolytic cleavage of its N-terminal hexapeptide to generate the mature form apolipoprotein C-II, which occurs as the minor form in plasma.

Its subcellular location is the secreted. In terms of biological role, component of chylomicrons, very low-density lipoproteins (VLDL), low-density lipoproteins (LDL), and high-density lipoproteins (HDL) in plasma. Plays an important role in lipoprotein metabolism as an activator of lipoprotein lipase, the enzyme which hydrolyzes the triacylglycerols on chylomicrons and VLDL. This chain is Apolipoprotein C-II (APOC2), found in Panthera tigris altaica (Siberian tiger).